The sequence spans 386 residues: Probable mannan endo-1,4-beta-mannosidase A (386 aa).

The first 21 residues, 1–21 (MKLNPSLLTAAGLVSAQLASA), serve as a signal peptide directing secretion. Residues Trp95 and Asn207 each contribute to the substrate site. The Proton donor role is filled by Glu208. Residue Tyr283 coordinates substrate. Glu316 functions as the Nucleophile in the catalytic mechanism. Asn336 carries an N-linked (GlcNAc...) asparagine glycan. A substrate-binding site is contributed by Trp346.

The protein belongs to the glycosyl hydrolase 5 (cellulase A) family.

It is found in the secreted. It carries out the reaction Random hydrolysis of (1-&gt;4)-beta-D-mannosidic linkages in mannans, galactomannans and glucomannans.. Endo-1,4-mannanase, a crucial enzyme for depolymerization of seed galactomannans and wood galactoglucomannans. In Aspergillus flavus (strain ATCC 200026 / FGSC A1120 / IAM 13836 / NRRL 3357 / JCM 12722 / SRRC 167), this protein is Probable mannan endo-1,4-beta-mannosidase A (manA).